A 340-amino-acid polypeptide reads, in one-letter code: uncharacterized protein (340 aa).

This is an uncharacterized protein from Acanthamoeba polyphaga mimivirus (APMV).